Here is a 349-residue protein sequence, read N- to C-terminus: T-cell immunoglobulin and mucin domain-containing protein 2 (349 aa).

The signal sequence occupies residues 1 to 20 (MVQLQVFISGLLLLLPGAVA). Over 21–275 (SYTVVQGHSV…QKLQRNPTKG (255 aa)) the chain is Extracellular. Positions 22–123 (YTVVQGHSVT…AFYFVDYLLE (102 aa)) constitute an Ig-like V-type domain. Cystine bridges form between cysteine 34-cysteine 107, cysteine 48-cysteine 59, and cysteine 54-cysteine 106. Residues asparagine 84 and asparagine 89 are each glycosylated (N-linked (GlcNAc...) asparagine). The disordered stretch occupies residues 128-271 (LPTSPPTRPT…AIPPQKLQRN (144 aa)). The segment covering 136 to 215 (PTNTGRPTTT…TSTPPTPEQT (80 aa)) has biased composition (low complexity). Residues 222 to 260 (ATTYYPDQTTAEVTEAPSHTPTDWNNTATSSDDSWNSDT) are compositionally biased toward polar residues. The chain crosses the membrane as a helical span at residues 276–296 (FYVGMSFAALLLLLLASTVAI). At 297 to 349 (TRYMVMRKNSGSLRFVAFPVSKIGASQNKVVEQARIEDEVYIIEDSPYFEEES) the chain is on the cytoplasmic side.

This sequence belongs to the immunoglobulin superfamily. TIM family. Homodimer.

Its subcellular location is the cell membrane. Its function is as follows. Probable receptor for SEMA4A involved in the regulation of T-cell function. The interaction with SEMA4A enhances T-cell activation. This Rattus norvegicus (Rat) protein is T-cell immunoglobulin and mucin domain-containing protein 2 (Timd2).